Here is a 163-residue protein sequence, read N- to C-terminus: Jun dimerization protein 2 (163 aa).

2 disordered regions span residues 1–20 and 59–89; these read MMPGQIPDPSVTAGSLPGLG and KRPQPVKSELDEEEERRKRRREKNKVAAARC. Lysine 65 participates in a covalent cross-link: Glycyl lysine isopeptide (Lys-Gly) (interchain with G-Cter in SUMO2). The 64-residue stretch at 72 to 135 folds into the bZIP domain; it reads EERRKRRREK…QQLILMLNRH (64 aa). A basic motif region spans residues 74-96; sequence RRKRRREKNKVAAARCRNKKKER. Residues 100–128 are leucine-zipper; it reads LQRESERLELMNAELKTQIEELKLERQQL. Residue threonine 148 is modified to Phosphothreonine; by MAPK8.

This sequence belongs to the bZIP family. ATF subfamily. As to quaternary structure, forms a homodimer or heterodimer with JUN, JUNB, JUND, CEBPG and ATF2 thereby inhibiting transactivation by JUN, ATF2 and CEBPG. Binds multiple DNA elements such as cAMP-response element (CRE) and TPA response element (TRE) either as homodimer or heterodimer. Interacts with IRF2BP1. In terms of processing, phosphorylation of Thr-148 by MAPK8 in response to different stress conditions such as, UV irradiation, oxidatives stress and anisomycin treatments. Post-translationally, polyubiquitinated; probably by IRF2BP1. As to expression, ubiquitously expressed in all adult tissues tested as well in embryos.

The protein localises to the nucleus. Its function is as follows. Component of the AP-1 transcription factor that represses transactivation mediated by the Jun family of proteins. Involved in a variety of transcriptional responses associated with AP-1, such as UV-induced apoptosis, cell differentiation, tumorigenesis and antitumogeneris. Can also function as a repressor by recruiting histone deacetylase 3/HDAC3 to the promoter region of JUN. May control transcription via direct regulation of the modification of histones and the assembly of chromatin. In Mus musculus (Mouse), this protein is Jun dimerization protein 2 (Jdp2).